The following is a 225-amino-acid chain: Cytidylate kinase (225 aa).

11–19 lines the ATP pocket; that stretch reads GPAAAGKST.

It belongs to the cytidylate kinase family. Type 1 subfamily.

The protein resides in the cytoplasm. The enzyme catalyses CMP + ATP = CDP + ADP. It catalyses the reaction dCMP + ATP = dCDP + ADP. This is Cytidylate kinase from Bacillus cereus (strain AH187).